We begin with the raw amino-acid sequence, 426 residues long: Aspartate aminotransferase, mitochondrial (426 aa).

The N-terminal 29 residues, 1–29 (MIRSARLISNIKFGQKNIRQFSTNTNWWA), are a transit peptide targeting the mitochondrion. Positions 60, 156, and 209 each coordinate substrate. Residue Lys-273 is modified to N6-(pyridoxal phosphate)lysine. Arg-401 provides a ligand contact to substrate.

The protein belongs to the class-I pyridoxal-phosphate-dependent aminotransferase family. Homodimer. Requires pyridoxal 5'-phosphate as cofactor.

The protein localises to the mitochondrion matrix. It localises to the cell membrane. It catalyses the reaction L-aspartate + 2-oxoglutarate = oxaloacetate + L-glutamate. It carries out the reaction L-kynurenine + 2-oxoglutarate = kynurenate + L-glutamate + H2O. Its function is as follows. Plays a key role in amino acid metabolism. Important for metabolite exchange between mitochondria and cytosol. The polypeptide is Aspartate aminotransferase, mitochondrial (aatA) (Dictyostelium discoideum (Social amoeba)).